A 117-amino-acid polypeptide reads, in one-letter code: Immunoglobulin heavy variable 1-69-2 (117 aa).

The N-terminal stretch at 1-19 (MDCTWRILLLVAAATGTHA) is a signal peptide. The framework-1 stretch occupies residues 20–44 (EVQLVQSGAEVKKPGATVKISCKVS). The Ig-like domain occupies 20–117 (EVQLVQSGAE…EDTAVYYCAT (98 aa)). Cys41 and Cys115 are joined by a disulfide. A complementarity-determining-1 region spans residues 45–52 (GYTFTDYY). Residues 53–69 (MHWVQQAPGKGLEWMGL) form a framework-2 region. The tract at residues 70–77 (VDPEDGET) is complementarity-determining-2. Residues 78–115 (IYAEKFQGRVTITADTSTDTAYMELSSLRSEDTAVYYC) are framework-3. The segment at 116–117 (AT) is complementarity-determining-3.

In terms of assembly, immunoglobulins are composed of two identical heavy chains and two identical light chains; disulfide-linked.

The protein resides in the secreted. It is found in the cell membrane. Its function is as follows. V region of the variable domain of immunoglobulin heavy chains that participates in the antigen recognition. Immunoglobulins, also known as antibodies, are membrane-bound or secreted glycoproteins produced by B lymphocytes. In the recognition phase of humoral immunity, the membrane-bound immunoglobulins serve as receptors which, upon binding of a specific antigen, trigger the clonal expansion and differentiation of B lymphocytes into immunoglobulins-secreting plasma cells. Secreted immunoglobulins mediate the effector phase of humoral immunity, which results in the elimination of bound antigens. The antigen binding site is formed by the variable domain of one heavy chain, together with that of its associated light chain. Thus, each immunoglobulin has two antigen binding sites with remarkable affinity for a particular antigen. The variable domains are assembled by a process called V-(D)-J rearrangement and can then be subjected to somatic hypermutations which, after exposure to antigen and selection, allow affinity maturation for a particular antigen. In Homo sapiens (Human), this protein is Immunoglobulin heavy variable 1-69-2.